A 201-amino-acid chain; its full sequence is Glycerol-3-phosphate acyltransferase (201 aa).

Transmembrane regions (helical) follow at residues 3–23, 51–71, 85–105, 116–136, 137–157, and 158–178; these read TVLF…VVVS, KAAI…VWLV, VALV…FRFV, VLLA…LVIA, YAFR…PFYY, and GLLF…ILLV.

The protein belongs to the PlsY family. As to quaternary structure, probably interacts with PlsX.

It is found in the cell inner membrane. The enzyme catalyses an acyl phosphate + sn-glycerol 3-phosphate = a 1-acyl-sn-glycero-3-phosphate + phosphate. It participates in lipid metabolism; phospholipid metabolism. Functionally, catalyzes the transfer of an acyl group from acyl-phosphate (acyl-PO(4)) to glycerol-3-phosphate (G3P) to form lysophosphatidic acid (LPA). This enzyme utilizes acyl-phosphate as fatty acyl donor, but not acyl-CoA or acyl-ACP. The sequence is that of Glycerol-3-phosphate acyltransferase from Janthinobacterium sp. (strain Marseille) (Minibacterium massiliensis).